A 166-amino-acid polypeptide reads, in one-letter code: Interferon gamma (166 aa).

A signal peptide spans 1–23; that stretch reads MKYTSYILALQLCVLLGFSGSYG. The residue at position 24 (Gln24) is a Pyrrolidone carboxylic acid. Asn39 and Asn106 each carry an N-linked (GlcNAc...) asparagine glycan.

This sequence belongs to the type II (or gamma) interferon family. In terms of assembly, homodimer. Interacts with IFNGR1 (via extracellular domain); this interaction promotes IFNGR1 dimerization. Released primarily from activated T lymphocytes.

It is found in the secreted. In terms of biological role, type II interferon produced by immune cells such as T-cells and NK cells that plays crucial roles in antimicrobial, antiviral, and antitumor responses by activating effector immune cells and enhancing antigen presentation. Primarily signals through the JAK-STAT pathway after interaction with its receptor IFNGR1 to affect gene regulation. Upon IFNG binding, IFNGR1 intracellular domain opens out to allow association of downstream signaling components JAK2, JAK1 and STAT1, leading to STAT1 activation, nuclear translocation and transcription of IFNG-regulated genes. Many of the induced genes are transcription factors such as IRF1 that are able to further drive regulation of a next wave of transcription. Plays a role in class I antigen presentation pathway by inducing a replacement of catalytic proteasome subunits with immunoproteasome subunits. In turn, increases the quantity, quality, and repertoire of peptides for class I MHC loading. Increases the efficiency of peptide generation also by inducing the expression of activator PA28 that associates with the proteasome and alters its proteolytic cleavage preference. Up-regulates as well MHC II complexes on the cell surface by promoting expression of several key molecules such as cathepsins B/CTSB, H/CTSH, and L/CTSL. Participates in the regulation of hematopoietic stem cells during development and under homeostatic conditions by affecting their development, quiescence, and differentiation. This is Interferon gamma (IFNG) from Cervus elaphus (Red deer).